The sequence spans 343 residues: Phenylalanine--tRNA ligase alpha subunit (343 aa).

Glu-268 contributes to the Mg(2+) binding site.

The protein belongs to the class-II aminoacyl-tRNA synthetase family. Phe-tRNA synthetase alpha subunit type 1 subfamily. In terms of assembly, tetramer of two alpha and two beta subunits. Requires Mg(2+) as cofactor.

It localises to the cytoplasm. The catalysed reaction is tRNA(Phe) + L-phenylalanine + ATP = L-phenylalanyl-tRNA(Phe) + AMP + diphosphate + H(+). The polypeptide is Phenylalanine--tRNA ligase alpha subunit (Cupriavidus necator (strain ATCC 17699 / DSM 428 / KCTC 22496 / NCIMB 10442 / H16 / Stanier 337) (Ralstonia eutropha)).